A 352-amino-acid chain; its full sequence is MEGISIYTSDNYTEEMGSGDYDSIKEPCFREENAHFNRIFLPTIYSIIFLTGIVGNGLVILVMGYQKKLRSMTDKYRLHLSVADLLFVITLPFWAVDAVANWYFGNFLCKAVHVIYTVNLYSSVLILAFISLDRYLAIVHATNSQKPRKLLAEKVVYVGVWIPALLLTIPDFIFASVSEADDRYICDRFYPNDLWVVVFQFQHIMVGLILPGIVILSCYCIIISKLSHSKGHQKRKALKTTVILILAFFACWLPYYIGISIDSFILLEIIKQGCEFENTVHKWISITEALAFFHCCLNPILYAFLGAKFKTSAQHALTSVSRGSSLKILSKGKRGGHSSVSTESESSSFHSS.

The interval 1–21 (MEGISIYTSDNYTEEMGSGDY) is important for chemokine binding and signaling. The Extracellular segment spans residues 1–38 (MEGISIYTSDNYTEEMGSGDYDSIKEPCFREENAHFNR). Y7 carries the sulfotyrosine modification. N-linked (GlcNAc...) asparagine glycosylation is present at N11. Position 12 is a sulfotyrosine (Y12). O-linked (Xyl...) (chondroitin sulfate) serine glycosylation occurs at S18. Y21 carries the post-translational modification Sulfotyrosine. 2 cysteine pairs are disulfide-bonded: C28–C274 and C109–C186. Residues 39–63 (IFLPTIYSIIFLTGIVGNGLVILVM) traverse the membrane as a helical segment. Residues 64–77 (GYQKKLRSMTDKYR) are Cytoplasmic-facing. A helical membrane pass occupies residues 78–99 (LHLSVADLLFVITLPFWAVDAV). Positions 94-97 (WAVD) are chemokine binding. The Extracellular portion of the chain corresponds to 100–110 (ANWYFGNFLCK). A helical membrane pass occupies residues 111–130 (AVHVIYTVNLYSSVLILAFI). The tract at residues 113-117 (HVIYT) is chemokine binding. Over 131-154 (SLDRYLAIVHATNSQKPRKLLAEK) the chain is Cytoplasmic. The Important for signaling motif lies at 133-135 (DRY). Residues 135-147 (YLAIVHATNSQKP) form an involved in dimerization; when bound to chemokine region. The helical transmembrane segment at 155-174 (VVYVGVWIPALLLTIPDFIF) threads the bilayer. Over 175–195 (ASVSEADDRYICDRFYPNDLW) the chain is Extracellular. The chemokine binding, important for signaling stretch occupies residues 186-190 (CDRFY). Residues 191–210 (PNDLWVVVFQFQHIMVGLIL) are involved in dimerization. The chain crosses the membrane as a helical span at residues 196–216 (VVVFQFQHIMVGLILPGIVIL). The Cytoplasmic segment spans residues 217 to 241 (SCYCIIISKLSHSKGHQKRKALKTT). A helical membrane pass occupies residues 242–261 (VILILAFFACWLPYYIGISI). At 262–282 (DSFILLEIIKQGCEFENTVHK) the chain is on the extracellular side. The interval 266–268 (LLE) is involved in dimerization. Residues 283–302 (WISITEALAFFHCCLNPILY) traverse the membrane as a helical segment. The Cytoplasmic segment spans residues 303-352 (AFLGAKFKTSAQHALTSVSRGSSLKILSKGKRGGHSSVSTESESSSFHSS). A phosphoserine mark is found at S319 and S321. Phosphoserine; by PKC and GRK6 occurs at positions 324 and 325. Positions 329-352 (LSKGKRGGHSSVSTESESSSFHSS) are disordered. At S330 the chain carries Phosphoserine; by GRK6. K331 is covalently cross-linked (Glycyl lysine isopeptide (Lys-Gly) (interchain with G-Cter in ubiquitin)). Low complexity predominate over residues 337–352 (HSSVSTESESSSFHSS). S339 is subject to Phosphoserine; by GRK6. A phosphoserine mark is found at S348 and S351.

This sequence belongs to the G-protein coupled receptor 1 family. As to quaternary structure, monomer. Can form homodimers. Interacts with CD164. Interacts with ARRB2; the interaction is dependent on the C-terminal phosphorylation of CXCR4 and allows activation of MAPK1 and MAPK3. Interacts with ARR3; the interaction is dependent on the C-terminal phosphorylation of CXCR4 and modulates calcium mobilization. Interacts with RNF113A; the interaction, enhanced by CXCL12, promotes CXCR4 ubiquitination and subsequent degradation. Interacts (via the cytoplasmic C-terminal) with ITCH (via the WW domains I and II); the interaction, enhanced by CXCL12, promotes CXCR4 ubiquitination and leads to its degradation. Interacts with extracellular ubiquitin. Interacts with DBN1; this interaction is enhanced by antigenic stimulation. Following LPS binding, may form a complex with GDF5, HSP90AA1 and HSPA8. Phosphorylated on agonist stimulation. Rapidly phosphorylated on serine and threonine residues in the C-terminal. Phosphorylation at Ser-324 and Ser-325 leads to recruitment of ITCH, ubiquitination and protein degradation. In terms of processing, ubiquitinated after ligand binding, leading to its degradation. Ubiquitinated by ITCH at the cell membrane on agonist stimulation. The ubiquitin-dependent mechanism, endosomal sorting complex required for transport (ESCRT), then targets CXCR4 for lysosomal degradation. This process is dependent also on prior Ser-/Thr-phosphorylation in the C-terminal of CXCR4. Also binding of ARRB1 to STAM negatively regulates CXCR4 sorting to lysosomes though modulating ubiquitination of SFR5S. Post-translationally, sulfation is required for efficient binding of CXCL12/SDF-1alpha and promotes its dimerization. O- and N-glycosylated. N-glycosylation can mask coreceptor function. The O-glycosylation chondroitin sulfate attachment does not affect interaction with CXCL12/SDF-1alpha nor its coreceptor activity.

The protein localises to the cell membrane. Its subcellular location is the cell junction. It is found in the early endosome. It localises to the late endosome. The protein resides in the lysosome. Functionally, receptor for the C-X-C chemokine CXCL12/SDF-1 that transduces a signal by increasing intracellular calcium ion levels and enhancing MAPK1/MAPK3 activation. Involved in the AKT signaling cascade. Plays a role in regulation of cell migration, e.g. during wound healing. Acts as a receptor for extracellular ubiquitin; leading to enhanced intracellular calcium ions and reduced cellular cAMP levels. Binds bacterial lipopolysaccharide (LPS) et mediates LPS-induced inflammatory response, including TNF secretion by monocytes. Involved in hematopoiesis and in cardiac ventricular septum formation. Also plays an essential role in vascularization of the gastrointestinal tract, probably by regulating vascular branching and/or remodeling processes in endothelial cells. Involved in cerebellar development. In the CNS, could mediate hippocampal-neuron survival. This Macaca fascicularis (Crab-eating macaque) protein is C-X-C chemokine receptor type 4 (CXCR4).